The following is a 72-amino-acid chain: Large ribosomal subunit protein uL29 (72 aa).

The protein belongs to the universal ribosomal protein uL29 family.

This Thermodesulfovibrio yellowstonii (strain ATCC 51303 / DSM 11347 / YP87) protein is Large ribosomal subunit protein uL29.